Reading from the N-terminus, the 454-residue chain is Alkaline extracellular protease (454 aa).

An N-terminal signal peptide occupies residues 1 to 15; that stretch reads MKLATAFTILTAVLA. The propeptide occupies 16-157; the sequence is APLAAPAPAP…EIPASSNAKR (142 aa). One can recognise an Inhibitor I9 domain in the interval 68–146; it reads FIVVFDSSAT…TVEPDTIVSL (79 aa). Asparagine 123 carries N-linked (GlcNAc...) asparagine glycosylation. A Peptidase S8 domain is found at 166–454; the sequence is QWGLSRISHK…NAVAYNGVGI (289 aa). Residues aspartate 200, histidine 231, and serine 397 each act as charge relay system in the active site.

This sequence belongs to the peptidase S8 family. In terms of processing, the pro-region is removed through cleavage by XPR6 after Lys156-Arg157, which yields mature active XPR2. Post-translationally, the 10 consecutive -X-Ala- or -X-Pro- dipeptides located over 100 amino acids upstream of the N-terminal of mature XPR2 are subject to dipeptidyl aminopeptidase (DPAPase)-processing. DPAPase activity is not necessary for XPR6 cleavage and for secretion of mature active XPR2. N-glycosylated. Glycosylation within the pro-region has no effect on secretion and maturation at 18 degrees Celsius, but is required for secretion at 28 degrees Celsius.

It localises to the secreted. It catalyses the reaction Hydrolysis of proteins with broad specificity for peptide bonds, and a preference for a large uncharged residue in P1. Hydrolyzes peptide amides.. With respect to regulation, the protease activity is completely inhibited by the serine inhibitor PMSF but is not affected by thiol group inhibitors and in the presence of dithiothreitol. In the presence of high concentrations of o-phenanthroline the protease activity is only partially inhibited. The pro-region plays an inhibitory role and may provide a mechanism for preventing premature activation in the secretory pathway. Major secreted protein that belongs to the subtilisin family serine proteases. This chain is Alkaline extracellular protease, found in Yarrowia lipolytica (strain CLIB 122 / E 150) (Yeast).